A 53-amino-acid chain; its full sequence is Sec-independent protein translocase protein TatA (53 aa).

The helical transmembrane segment at 1–21 threads the bilayer; that stretch reads MGMSVSHLLIVLLIIFVLFGA.

It belongs to the TatA/E family. In terms of assembly, the Tat system comprises two distinct complexes: a TatABC complex, containing multiple copies of TatA, TatB and TatC subunits, and a separate TatA complex, containing only TatA subunits. Substrates initially bind to the TatABC complex, which probably triggers association of the separate TatA complex to form the active translocon.

The protein resides in the cell inner membrane. Functionally, part of the twin-arginine translocation (Tat) system that transports large folded proteins containing a characteristic twin-arginine motif in their signal peptide across membranes. TatA could form the protein-conducting channel of the Tat system. The protein is Sec-independent protein translocase protein TatA of Rickettsia massiliae (strain Mtu5).